Here is a 188-residue protein sequence, read N- to C-terminus: uncharacterized protein (188 aa).

This is an uncharacterized protein from Homo sapiens (Human).